Here is an 871-residue protein sequence, read N- to C-terminus: Nonsense-mediated mRNA decay factor SMG8 (871 aa).

Positions 541–596 are disordered; the sequence is LDDMELPESLQQSYTSSEDSSEDDDDFAIQTASSEDSLSGSDSYARPGSRRDEFES. The span at 573–583 shows a compositional bias: low complexity; the sequence is SSEDSLSGSDS.

It belongs to the SMG8 family.

In terms of biological role, involved in nonsense-mediated decay (NMD) of mRNAs containing premature stop codons. Probable component of kinase complex containing smg-1 and recruited to stalled ribosomes. In Caenorhabditis briggsae, this protein is Nonsense-mediated mRNA decay factor SMG8 (smg-8).